The following is a 772-amino-acid chain: DNA ligase (772 aa).

NAD(+) contacts are provided by residues 80–84, 130–131, and glutamate 160; these read DAEYD and SL. The N6-AMP-lysine intermediate role is filled by lysine 162. NAD(+)-binding residues include arginine 183, glutamate 220, lysine 336, and lysine 360. The Zn(2+) site is built by cysteine 454, cysteine 457, cysteine 473, and cysteine 479. In terms of domain architecture, BRCT spans 685–772; it reads APEQTLEGLT…NGPQGITTIG (88 aa).

This sequence belongs to the NAD-dependent DNA ligase family. LigA subfamily. Mg(2+) serves as cofactor. It depends on Mn(2+) as a cofactor.

It catalyses the reaction NAD(+) + (deoxyribonucleotide)n-3'-hydroxyl + 5'-phospho-(deoxyribonucleotide)m = (deoxyribonucleotide)n+m + AMP + beta-nicotinamide D-nucleotide.. Functionally, DNA ligase that catalyzes the formation of phosphodiester linkages between 5'-phosphoryl and 3'-hydroxyl groups in double-stranded DNA using NAD as a coenzyme and as the energy source for the reaction. It is essential for DNA replication and repair of damaged DNA. In Cutibacterium acnes (strain DSM 16379 / KPA171202) (Propionibacterium acnes), this protein is DNA ligase.